The following is a 376-amino-acid chain: Glucose-1-phosphate adenylyltransferase (376 aa).

Residues Y101, G166, 181–182 (EK), and S192 each bind alpha-D-glucose 1-phosphate.

It belongs to the bacterial/plant glucose-1-phosphate adenylyltransferase family. As to quaternary structure, homotetramer.

It catalyses the reaction alpha-D-glucose 1-phosphate + ATP + H(+) = ADP-alpha-D-glucose + diphosphate. It functions in the pathway glycan biosynthesis; glycogen biosynthesis. In terms of biological role, involved in the biosynthesis of ADP-glucose, a building block required for the elongation reactions to produce glycogen. Catalyzes the reaction between ATP and alpha-D-glucose 1-phosphate (G1P) to produce pyrophosphate and ADP-Glc. In Bacillus cereus (strain ATCC 10987 / NRS 248), this protein is Glucose-1-phosphate adenylyltransferase.